The chain runs to 478 residues: Odorant receptor coreceptor (478 aa).

The Cytoplasmic portion of the chain corresponds to Met-1–Lys-41. Residues Val-42–Leu-62 form a helical membrane-spanning segment. The Extracellular segment spans residues Ala-63–Thr-73. Residues Ala-74–Val-94 form a helical membrane-spanning segment. The Cytoplasmic segment spans residues Asn-95–Leu-133. Residues Leu-134–Phe-154 traverse the membrane as a helical segment. Residues Gly-155–Met-188 lie on the Extracellular side of the membrane. Asn-167 carries N-linked (GlcNAc...) asparagine glycosylation. The chain crosses the membrane as a helical span at residues Ser-189–Val-209. The Cytoplasmic portion of the chain corresponds to Gln-210–Lys-338. A helical transmembrane segment spans residues His-339–Thr-361. Over Ser-362 to Tyr-382 the chain is Extracellular. Residues Gly-383 to Phe-403 traverse the membrane as a helical segment. The Cytoplasmic portion of the chain corresponds to Gly-404–Thr-454. A helical membrane pass occupies residues Val-455–Val-475. Topologically, residues Gln-476–Lys-478 are extracellular.

This sequence belongs to the insect chemoreceptor superfamily. Heteromeric odorant receptor channel (TC 1.A.69) family. Orco subfamily. In terms of assembly, heterodimer with conventional odorant receptors (ORs). Complexes exist early in the endomembrane system in olfactory sensory neurons (OSNs), coupling these complexes to the conserved ciliary trafficking pathway. As to expression, expressed in olfactory and gustatory organs of both adult and immature stages. Highest expression is seen in adult antennae and the maxillary palps. Lower expression also seen in proboscis and legs. Within the antenna, expression originates in cell bodies and projects into the lumen of an individual sensillum, presumably along the dendritic extension of the neuron. Within the maxillary palps, expression is seen in a small number of cell bodies and in projections into the sensillar cone. Within the probiscus, expression is seen in a single type of sensillum on the outer surface of the labellar lobes.

Its subcellular location is the cell membrane. In terms of biological role, odorant coreceptor which complexes with conventional odorant receptors (ORs) to form odorant-sensing units, providing sensitive and prolonged odorant signaling and calcium permeability. Orco is a universal and integral part of the functional odorant receptor, involved in the dendritic localization of other olfactory receptors. Can form functional ion channels in the absence of an odor-binding OR. Plays a key role in preferred attraction of females for humans over non-human hosts for blood feeding. Human attraction plays a crucial role in the transmission of Plasmodium protozoans by the mosquito leading to infection diseases like malaria. Also required for the response to N,N-Diethyl-meta-toluamide (DEET), the most widely used insect repellent worldwide. This Anopheles gambiae (African malaria mosquito) protein is Odorant receptor coreceptor (Orco).